The sequence spans 238 residues: Small ribosomal subunit protein uS2 (238 aa).

Belongs to the universal ribosomal protein uS2 family.

The sequence is that of Small ribosomal subunit protein uS2 from Synechococcus sp. (strain CC9311).